A 368-amino-acid chain; its full sequence is N-acetylneuraminate epimerase (368 aa).

Positions 1 to 19 (MNKTITALTIIMASFATNA) are cleaved as a signal peptide. Kelch repeat units follow at residues 40 to 84 (TVYI…AFID), 86 to 137 (NLYV…FVHN), 139 to 173 (KAYVTGGVNQNIFNGYFEDLNEAGKDSTTIDKINA), 174 to 219 (HYFD…VNKG), 222 to 265 (TWLI…VAGG), 287 to 336 (ENYQ…PWNN), and 338 to 367 (LLIIGGETAGGKAVTDSVLISVKDNKVTVQ). Catalysis depends on glutamate 228, which acts as the Proton acceptor.

This sequence belongs to the NanM family. In terms of assembly, homodimer.

Its subcellular location is the periplasm. The enzyme catalyses N-acetyl-alpha-neuraminate = N-acetyl-beta-neuraminate. Functionally, converts alpha-N-acetylneuranimic acid (Neu5Ac) to the beta-anomer, accelerating the equilibrium between the alpha- and beta-anomers. Probably facilitates sialidase-negative bacteria to compete successfully for limited amounts of extracellular Neu5Ac, which is likely taken up in the beta-anomer. In addition, the rapid removal of sialic acid from solution might be advantageous to the bacterium to damp down host responses. The sequence is that of N-acetylneuraminate epimerase from Escherichia coli O1:K1 / APEC.